A 330-amino-acid polypeptide reads, in one-letter code: tRNA N6-adenosine threonylcarbamoyltransferase (330 aa).

The Fe cation site is built by His-110 and His-114. Residues 133–137 (LVSGG), Asp-166, Gly-179, and Asn-268 contribute to the substrate site. Asp-296 contacts Fe cation.

It belongs to the KAE1 / TsaD family. The cofactor is Fe(2+).

Its subcellular location is the cytoplasm. It catalyses the reaction L-threonylcarbamoyladenylate + adenosine(37) in tRNA = N(6)-L-threonylcarbamoyladenosine(37) in tRNA + AMP + H(+). Functionally, required for the formation of a threonylcarbamoyl group on adenosine at position 37 (t(6)A37) in tRNAs that read codons beginning with adenine. Is involved in the transfer of the threonylcarbamoyl moiety of threonylcarbamoyl-AMP (TC-AMP) to the N6 group of A37, together with TsaE and TsaB. TsaD likely plays a direct catalytic role in this reaction. The polypeptide is tRNA N6-adenosine threonylcarbamoyltransferase (Kosmotoga olearia (strain ATCC BAA-1733 / DSM 21960 / TBF 19.5.1)).